Here is a 281-residue protein sequence, read N- to C-terminus: Aliphatic sulfonates import ATP-binding protein SsuB (281 aa).

In terms of domain architecture, ABC transporter spans 40 to 263 (LTLRNLRKSF…RRGSADLAAL (224 aa)). ATP is bound at residue 72–79 (GRSGCGKS).

It belongs to the ABC transporter superfamily. Aliphatic sulfonates importer (TC 3.A.1.17.2) family. In terms of assembly, the complex is composed of two ATP-binding proteins (SsuB), two transmembrane proteins (SsuC) and a solute-binding protein (SsuA).

The protein localises to the cell inner membrane. It carries out the reaction ATP + H2O + aliphatic sulfonate-[sulfonate-binding protein]Side 1 = ADP + phosphate + aliphatic sulfonateSide 2 + [sulfonate-binding protein]Side 1.. Its function is as follows. Part of the ABC transporter complex SsuABC involved in aliphatic sulfonates import. Responsible for energy coupling to the transport system. The protein is Aliphatic sulfonates import ATP-binding protein SsuB of Rhodopseudomonas palustris (strain BisA53).